The following is a 346-amino-acid chain: MQTLNTLDLQTTSLKIVNGQLWILDQQALPQRQEWLLADTVASLIEHIQALRVRGAPLIGLSASLLLALLAERGLSQALLEQALIALRESRPTAVNLMNNLARMQQALLQPNWVTAMAAEALRLVDEDRELCERIAQHGAALVKPGSNLLTHCNTGGLATAGIGTAIGVLLRAHQQGNLRQVWVDETRPLLQGGRLTAWELGELGIPYQLICDSMAASLMAHGQVDAIWVGADRIAANGDVANKIGTYSLAVLAHYHRIPFYVAAPHTTHDPDCPDGAAIPIEQRAASEVTGVSGGFGHCQWAPKDTAVYNPAFDVTPAALISGWVLDSGVITPEQVAAGFFQPHR.

Residues 54–56 (RGA), Arg-91, and Gln-192 contribute to the substrate site. Asp-233 functions as the Proton donor in the catalytic mechanism. Residue 243 to 244 (NK) participates in substrate binding.

Belongs to the eIF-2B alpha/beta/delta subunits family. MtnA subfamily.

The enzyme catalyses 5-(methylsulfanyl)-alpha-D-ribose 1-phosphate = 5-(methylsulfanyl)-D-ribulose 1-phosphate. Its pathway is amino-acid biosynthesis; L-methionine biosynthesis via salvage pathway; L-methionine from S-methyl-5-thio-alpha-D-ribose 1-phosphate: step 1/6. Functionally, catalyzes the interconversion of methylthioribose-1-phosphate (MTR-1-P) into methylthioribulose-1-phosphate (MTRu-1-P). This Yersinia pseudotuberculosis serotype IB (strain PB1/+) protein is Methylthioribose-1-phosphate isomerase.